Here is a 148-residue protein sequence, read N- to C-terminus: Large ribosomal subunit protein bL9 (148 aa).

It belongs to the bacterial ribosomal protein bL9 family.

Functionally, binds to the 23S rRNA. This is Large ribosomal subunit protein bL9 from Stutzerimonas stutzeri (strain A1501) (Pseudomonas stutzeri).